Reading from the N-terminus, the 377-residue chain is Queuine tRNA-ribosyltransferase (377 aa).

Asp-94 acts as the Proton acceptor in catalysis. Substrate contacts are provided by residues 94-98 (DSGGF), Asp-148, Gln-191, and Gly-218. The segment at 249-255 (GVGTPDD) is RNA binding. Asp-268 acts as the Nucleophile in catalysis. The RNA binding; important for wobble base 34 recognition stretch occupies residues 273 to 277 (TRAGR).

The protein belongs to the queuine tRNA-ribosyltransferase family. Homodimer. Within each dimer, one monomer is responsible for RNA recognition and catalysis, while the other monomer binds to the replacement base PreQ1.

It carries out the reaction 7-aminomethyl-7-carbaguanine + guanosine(34) in tRNA = 7-aminomethyl-7-carbaguanosine(34) in tRNA + guanine. It functions in the pathway tRNA modification; tRNA-queuosine biosynthesis. Catalyzes the base-exchange of a guanine (G) residue with the queuine precursor 7-aminomethyl-7-deazaguanine (PreQ1) at position 34 (anticodon wobble position) in tRNAs with GU(N) anticodons (tRNA-Asp, -Asn, -His and -Tyr). Catalysis occurs through a double-displacement mechanism. The nucleophile active site attacks the C1' of nucleotide 34 to detach the guanine base from the RNA, forming a covalent enzyme-RNA intermediate. The proton acceptor active site deprotonates the incoming PreQ1, allowing a nucleophilic attack on the C1' of the ribose to form the product. After dissociation, two additional enzymatic reactions on the tRNA convert PreQ1 to queuine (Q), resulting in the hypermodified nucleoside queuosine (7-(((4,5-cis-dihydroxy-2-cyclopenten-1-yl)amino)methyl)-7-deazaguanosine). This is Queuine tRNA-ribosyltransferase from Brucella melitensis biotype 1 (strain ATCC 23456 / CCUG 17765 / NCTC 10094 / 16M).